Consider the following 215-residue polypeptide: Interleukin-12 subunit alpha (215 aa).

Residues 1 to 22 form the signal peptide; the sequence is MCQSRYLLFLATLALLNHLSLA. Disulfide bonds link cysteine 33–cysteine 106, cysteine 60–cysteine 192, and cysteine 81–cysteine 119. Asparagine 89 carries N-linked (GlcNAc...) asparagine glycosylation.

It belongs to the IL-6 superfamily. Heterodimer with IL12B; disulfide-linked. This heterodimer is known as interleukin IL-12. Heterodimer with EBI3/IL27B; not disulfide-linked. This heterodimer is known as interleukin IL-35. Interacts with NBR1; this interaction promotes IL-12 secretion.

The protein localises to the secreted. Functionally, heterodimerizes with IL12B to form the IL-12 cytokine or with EBI3/IL27B to form the IL-35 cytokine. IL-12 is primarily produced by professional antigen-presenting cells (APCs) such as B-cells and dendritic cells (DCs) as well as macrophages and granulocytes and regulates T-cell and natural killer-cell responses, induces the production of interferon-gamma (IFN-gamma), favors the differentiation of T-helper 1 (Th1) cells and is an important link between innate resistance and adaptive immunity. Mechanistically, exerts its biological effects through a receptor composed of IL12R1 and IL12R2 subunits. Binding to the receptor results in the rapid tyrosine phosphorylation of a number of cellular substrates including the JAK family kinases TYK2 and JAK2. In turn, recruited STAT4 gets phosphorylated and translocates to the nucleus where it regulates cytokine/growth factor responsive genes. As part of IL-35, plays essential roles in maintaining the immune homeostasis of the liver microenvironment and also functions as an immune-suppressive cytokine. Mediates biological events through unconventional receptors composed of IL12RB2 and gp130/IL6ST heterodimers or homodimers. Signaling requires the transcription factors STAT1 and STAT4, which form a unique heterodimer that binds to distinct DNA sites. This is Interleukin-12 subunit alpha (Il12a) from Mus musculus (Mouse).